The chain runs to 883 residues: Serine/threonine-protein kinase greatwall (883 aa).

Met-1 carries the N-acetylmethionine modification. Positions 1-23 are disordered; sequence MEPTMGGEMESGGGAATGECVNR. The region spanning 35 to 839 is the Protein kinase domain; sequence FTIVKPISRG…MKELKHHPLF (805 aa). ATP-binding positions include 41–49 and Lys-62; that span reads ISRGAFGKV. Asp-156 acts as the Proton acceptor in catalysis. Thr-209 and Thr-224 each carry phosphothreonine. Residue Ser-295 is modified to Phosphoserine. Positions 298–317 are disordered; that stretch reads RLATSSTSSPSHTFISSMES. Low complexity predominate over residues 301-314; the sequence is TSSTSSPSHTFISS. Phosphoserine occurs at positions 373 and 456. The interval 511–530 is disordered; the sequence is ENVGSSFTDKHQTPEKSPVP. Thr-523 bears the Phosphothreonine mark. Ser-556 and Ser-560 each carry phosphoserine. Positions 569–597 are disordered; it reads IHMDSDSSFPGISIMESPLGGQSLDPDKN. Phosphoserine is present on residues Ser-635, Ser-661, and Ser-672. The interval 706–737 is disordered; sequence RSDMPYQQTPNQVKSETPYRTPKSVRRGAAPV. Residues 710–720 are compositionally biased toward polar residues; the sequence is PYQQTPNQVKS. Thr-726 carries the post-translational modification Phosphothreonine. The residue at position 729 (Ser-729) is a Phosphoserine. Thr-745 bears the Phosphothreonine; by CDK1 mark. An AGC-kinase C-terminal domain is found at 840 to 883; sequence SGVDWENLQHQKMPFIPQPDDETDTSYFEARNNAQHLTVSGFSL. 2 positions are modified to phosphoserine: Ser-879 and Ser-882.

It belongs to the protein kinase superfamily. AGC Ser/Thr protein kinase family. Post-translationally, phosphorylation at Thr-745 by CDK1 during M phase activates its kinase activity. Maximum phosphorylation occurs in prometaphase.

Its subcellular location is the cytoplasm. The protein resides in the cytoskeleton. The protein localises to the microtubule organizing center. It is found in the centrosome. It localises to the nucleus. It catalyses the reaction L-seryl-[protein] + ATP = O-phospho-L-seryl-[protein] + ADP + H(+). The enzyme catalyses L-threonyl-[protein] + ATP = O-phospho-L-threonyl-[protein] + ADP + H(+). In terms of biological role, serine/threonine kinase that plays a key role in M phase by acting as a regulator of mitosis entry and maintenance. Acts by promoting the inactivation of protein phosphatase 2A (PP2A) during M phase: does not directly inhibit PP2A but acts by mediating phosphorylation and subsequent activation of ARPP19 and ENSA at 'Ser-62' and 'Ser-67', respectively. ARPP19 and ENSA are phosphatase inhibitors that specifically inhibit the PPP2R2D (PR55-delta) subunit of PP2A. Inactivation of PP2A during M phase is essential to keep cyclin-B1-CDK1 activity high. Following DNA damage, it is also involved in checkpoint recovery by being inhibited. The protein is Serine/threonine-protein kinase greatwall (MASTL) of Bos taurus (Bovine).